The sequence spans 130 residues: Fluoride-specific ion channel FluC (130 aa).

A run of 4 helical transmembrane segments spans residues 3–23 (LVFL…YFVG), 38–58 (LGTF…GHLA), 67–87 (FGIF…SYGL), and 102–122 (ISYV…GWFL). Residues Gly77 and Thr80 each coordinate Na(+).

The protein belongs to the fluoride channel Fluc/FEX (TC 1.A.43) family.

It is found in the cell inner membrane. It catalyses the reaction fluoride(in) = fluoride(out). With respect to regulation, na(+) is not transported, but it plays an essential structural role and its presence is essential for fluoride channel function. Fluoride-specific ion channel. Important for reducing fluoride concentration in the cell, thus reducing its toxicity. The sequence is that of Fluoride-specific ion channel FluC from Helicobacter pylori (strain J99 / ATCC 700824) (Campylobacter pylori J99).